We begin with the raw amino-acid sequence, 546 residues long: Carboxypeptidase Y homolog A (546 aa).

The N-terminal stretch at 1-17 (MKLLASTVLVGAAAASI) is a signal peptide. The propeptide occupies 18 to 132 (TPQQQVLQNP…KLEQYNLRAK (115 aa)). 5 disulfide bridges follow: Cys-186–Cys-426, Cys-320–Cys-334, Cys-344–Cys-367, Cys-351–Cys-360, and Cys-389–Cys-396. N-linked (GlcNAc...) asparagine glycosylation is present at Asn-217. Ser-273 is an active-site residue. Asp-465 is an active-site residue. An N-linked (GlcNAc...) asparagine glycan is attached at Asn-512. Residue His-523 is part of the active site.

This sequence belongs to the peptidase S10 family.

It is found in the vacuole. The catalysed reaction is Release of a C-terminal amino acid with broad specificity.. Its function is as follows. Vacuolar carboxypeptidase involved in degradation of small peptides. Digests preferentially peptides containing an aliphatic or hydrophobic residue in P1' position, as well as methionine, leucine or phenylalanine in P1 position of ester substrate. The protein is Carboxypeptidase Y homolog A (CPYA) of Botryotinia fuckeliana (strain B05.10) (Noble rot fungus).